The following is a 347-amino-acid chain: Ubiquitin thioesterase Otu1 (347 aa).

The Ubiquitin-like domain maps to 5-87; the sequence is FSVKLKSKKG…LIVEEKAAPA (83 aa). Residues 8-89 form a UBX-like region; that stretch reads KLKSKKGQFI…VEEKAAPAPA (82 aa). The region spanning 150-274 is the OTU domain; it reads LLKKVVPADN…GIHYDPLYME (125 aa). Positions 155-161 are cys-loop; it reads VPADNSC. Asp-158 is a catalytic residue. Cys-161 (nucleophile) is an active-site residue. The variable-loop stretch occupies residues 213–223; that stretch reads IQKADSWGGAI. Positions 263–267 are his-loop; the sequence is FDGIH. Ile-266 serves as a coordination point for substrate. Residue His-267 is part of the active site. The segment at 290 to 295 is S2 site; that stretch reads LGVYQQ. A C2H2-type zinc finger spans residues 317–341; the sequence is LRCMQCDVRLVGQVQAQEHAKQTGH. Residue His-341 is part of the active site.

The enzyme catalyses Thiol-dependent hydrolysis of ester, thioester, amide, peptide and isopeptide bonds formed by the C-terminal Gly of ubiquitin (a 76-residue protein attached to proteins as an intracellular targeting signal).. Hydrolase that can remove conjugated ubiquitin from proteins and may therefore play an important regulatory role at the level of protein turnover by preventing degradation. Involved in the regulation of DNA damage repair. In Drosophila melanogaster (Fruit fly), this protein is Ubiquitin thioesterase Otu1.